We begin with the raw amino-acid sequence, 976 residues long: 3-O-beta-L-arabinopyranosyl-alpha-L-arabinofuranosidase (976 aa).

An N-terminal signal peptide occupies residues 1–28 (MSHRNKALVAIVAGTALLISSGAAIGQA). Glutamate 190 acts as the Proton donor in catalysis. The active-site Nucleophile is the glutamate 315. In terms of domain architecture, CBM6 spans 519-654 (LLVEEVENTV…DNTLDKFLLY (136 aa)).

Belongs to the glycosyl hydrolase 39 family.

It is found in the secreted. It catalyses the reaction Hydrolysis of beta-L-Arap-(1-&gt;3)-L-Araf disaccharides from non-reducing terminals in branches of type II arabinogalactan attached to proteins.. Functionally, hydrolase involved in the degradation of the gum arabic arabinogalactan protein (AGP) and larch AGP. Catalyzes the release of 3-O-beta-L-arabinopyranosyl-L-arabinose (beta-L-Arap-(1-&gt;3)-L-Ara) from gum arabic AGP and larch AGP. Also cleaves a small amount of beta-L-Arap-(1-&gt;3)-L-Ara from sugar beet arabinan, but wheat AGP cannot be used as a substrate. Can also release 3-O-alpha-D-galactopyranosyl-L-arabinose (alpha-D-Galp-(1-&gt;3)-L-Ara) from gum arabic AGP, with low efficiency. The polypeptide is 3-O-beta-L-arabinopyranosyl-alpha-L-arabinofuranosidase (Bifidobacterium pseudocatenulatum).